The following is a 257-amino-acid chain: Glutamate racemase (257 aa).

Residues 12 to 13 (DS) and 44 to 45 (YG) contribute to the substrate site. The active-site Proton donor/acceptor is Cys-75. 76–77 (NT) serves as a coordination point for substrate. Cys-185 functions as the Proton donor/acceptor in the catalytic mechanism. 186-187 (TH) is a binding site for substrate.

This sequence belongs to the aspartate/glutamate racemases family.

The catalysed reaction is L-glutamate = D-glutamate. Its pathway is cell wall biogenesis; peptidoglycan biosynthesis. Functionally, provides the (R)-glutamate required for cell wall biosynthesis. The polypeptide is Glutamate racemase (Clostridium botulinum (strain Langeland / NCTC 10281 / Type F)).